Reading from the N-terminus, the 861-residue chain is Leucine--tRNA ligase (861 aa).

The 'HIGH' region signature appears at 42–52 (PYPSGKLHMGH). Residues 620-624 (KMSKS) carry the 'KMSKS' region motif. K623 contributes to the ATP binding site.

It belongs to the class-I aminoacyl-tRNA synthetase family.

It localises to the cytoplasm. It catalyses the reaction tRNA(Leu) + L-leucine + ATP = L-leucyl-tRNA(Leu) + AMP + diphosphate. This is Leucine--tRNA ligase from Hahella chejuensis (strain KCTC 2396).